Reading from the N-terminus, the 168-residue chain is Protein OPG162 (168 aa).

Residues 1–14 (MKSLNRQTVSRFKK) lie on the Intravirion side of the membrane. Residues 15 to 37 (LSVPAAIMMILSTIISGIGTFLH) form a helical membrane-spanning segment. Topologically, residues 38 to 168 (YKEELMPSAC…SVLCVKRFYK (131 aa)) are virion surface. A C-type lectin domain is found at 54-163 (YDKHCYLDTN…CKSTQSVLCV (110 aa)). Cystine bridges form between C75–C162 and C141–C154. N-linked (GlcNAc...) asparagine; by host glycosylation is present at N133.

This sequence belongs to the orthopoxvirus OPG162 protein family. In terms of assembly, interacts with protein OPG161. Interacts with protein OPG164. Interacts with protein OPG190.

Its subcellular location is the virion membrane. It localises to the host Golgi apparatus. Its function is as follows. Forms a complex with OPG162 and OPG190 to coordinate the incorporation of OPG164 into wrapped enveloped virion (EV) membranes and, subsequently, the production of actin tails. Therefore plays an essential role in efficient cell-to-cell spread of viral particles. The protein is Protein OPG162 (OPG162) of Variola virus (isolate Human/India/Ind3/1967) (VARV).